The chain runs to 406 residues: Cysteine desulfurase (406 aa).

Lys226 is subject to N6-(pyridoxal phosphate)lysine. The active-site Cysteine persulfide intermediate is Cys364.

The protein belongs to the class-V pyridoxal-phosphate-dependent aminotransferase family. Csd subfamily. In terms of assembly, homodimer. Interacts with SufE and the SufBCD complex composed of SufB, SufC and SufD. The interaction with SufE is required to mediate the direct transfer of the sulfur atom from the S-sulfanylcysteine. Pyridoxal 5'-phosphate is required as a cofactor.

The protein resides in the cytoplasm. It catalyses the reaction (sulfur carrier)-H + L-cysteine = (sulfur carrier)-SH + L-alanine. The catalysed reaction is L-selenocysteine + AH2 = hydrogenselenide + L-alanine + A + H(+). It functions in the pathway cofactor biosynthesis; iron-sulfur cluster biosynthesis. In terms of biological role, cysteine desulfurases mobilize the sulfur from L-cysteine to yield L-alanine, an essential step in sulfur metabolism for biosynthesis of a variety of sulfur-containing biomolecules. Component of the suf operon, which is activated and required under specific conditions such as oxidative stress and iron limitation. Acts as a potent selenocysteine lyase in vitro, that mobilizes selenium from L-selenocysteine. Selenocysteine lyase activity is however unsure in vivo. The sequence is that of Cysteine desulfurase from Escherichia coli (strain SE11).